Consider the following 1049-residue polypeptide: Cellulose synthase A catalytic subunit 4 [UDP-forming] (1049 aa).

Residues 1–215 are Cytoplasmic-facing; sequence MEPNTMASFD…ISSSKISPYR (215 aa). Residues Cys-23, Cys-26, Cys-42, Cys-45, Cys-50, Cys-53, Cys-65, and Cys-68 each coordinate Zn(2+). An RING-type; degenerate zinc finger spans residues 23 to 69; sequence CKVCGDEVKDDDNGQTFVACHVCVYPVCKPCYEYERSNGNKCCPQCN. Residues 76 to 98 are disordered; it reads KGSPKIAGDEENNGPDDSDDELN. The segment covering 84–96 has biased composition (acidic residues); the sequence is DEENNGPDDSDDE. Ser-135 bears the Phosphoserine mark. Residues 216–236 form a helical membrane-spanning segment; that stretch reads IVIVLRLVILVFFFRFRILTP. At 237-239 the chain is on the extracellular side; that stretch reads AKD. The helical transmembrane segment at 240 to 260 threads the bilayer; that stretch reads AYPLWLISVICEIWFALSWIL. Residues 261 to 831 are Cytoplasmic-facing; sequence DQFPKWFPIN…INTIVYPFTS (571 aa). Residues Ser-299, Lys-305, Glu-306, and Asp-335 each contribute to the UDP-alpha-D-glucose site. Asp-335 is a catalytic residue. Residues 389–416 adopt a coiled-coil conformation; that stretch reads VKDRRAMKREYEEFKVRINALVAKAQKK. A UDP-alpha-D-glucose-binding site is contributed by Lys-476. The Mn(2+) site is built by Lys-477 and Asp-501. Asp-748 is a catalytic residue. A helical membrane pass occupies residues 832-852; that stretch reads IPLLAYCTIPAVCLLTGKFII. Over 853–857 the chain is Extracellular; the sequence is PTINN. A helical membrane pass occupies residues 858 to 878; the sequence is FASIWFLALFLSIIATAILEL. Residues 879 to 895 lie on the Cytoplasmic side of the membrane; that stretch reads RWSGVSINDLWRNEQFW. Residues 896 to 916 form a helical membrane-spanning segment; sequence VIGGVSAHLFAVFQGLLKVLF. Topologically, residues 917–945 are extracellular; it reads GVDTNFTVTSKGASDEADEFGDLYLFKWT. N-linked (GlcNAc...) asparagine glycosylation is present at Asn-921. The helical transmembrane segment at 946–966 threads the bilayer; that stretch reads TLLIPPTTLIILNMVGVVAGV. The Cytoplasmic segment spans residues 967 to 977; sequence SDAINNGYGSW. Residues 978–998 traverse the membrane as a helical segment; it reads GPLFGKLFFAFWVIVHLYPFL. At 999–1007 the chain is on the extracellular side; it reads KGLMGRQNR. Residues 1008-1028 form a helical membrane-spanning segment; the sequence is TPTIVVLWSILLASIFSLVWV. The Cytoplasmic portion of the chain corresponds to 1029 to 1049; that stretch reads RIDPFLPKQTGPLLKQCGVDC.

Belongs to the glycosyltransferase 2 family. Plant cellulose synthase subfamily. Interacts with CESA7 and CESA8. Assembly with CESA7 and CESA8 is required for functional complex and localization in secondary cell wall deposition sites. Interacts with STL1 and STL2, but not with GOT1. It depends on Zn(2+) as a cofactor. The cofactor is Mn(2+). In terms of processing, S-acylated. Confined to secondary cell wall developing tissues such as xylems and interfascicular regions. Expressed in roots, hypocotyls, leaves, inflorescences and flowers.

Its subcellular location is the cell membrane. The enzyme catalyses [(1-&gt;4)-beta-D-glucosyl](n) + UDP-alpha-D-glucose = [(1-&gt;4)-beta-D-glucosyl](n+1) + UDP + H(+). The protein operates within glycan metabolism; plant cellulose biosynthesis. Catalytic subunit of cellulose synthase terminal complexes ('rosettes'), required for beta-1,4-glucan microfibril crystallization, a major mechanism of the cell wall formation. Involved in the secondary cell wall formation. Required for the xylem cell wall thickening. This chain is Cellulose synthase A catalytic subunit 4 [UDP-forming], found in Arabidopsis thaliana (Mouse-ear cress).